We begin with the raw amino-acid sequence, 546 residues long: Probable Xaa-Pro aminopeptidase pepP (546 aa).

Mn(2+) contacts are provided by aspartate 341, aspartate 352, glutamate 475, and glutamate 515.

The protein belongs to the peptidase M24B family. It depends on Mn(2+) as a cofactor.

It carries out the reaction Release of any N-terminal amino acid, including proline, that is linked to proline, even from a dipeptide or tripeptide.. Catalyzes the removal of a penultimate prolyl residue from the N-termini of peptides. The chain is Probable Xaa-Pro aminopeptidase pepP (pepP) from Sclerotinia sclerotiorum (strain ATCC 18683 / 1980 / Ss-1) (White mold).